We begin with the raw amino-acid sequence, 423 residues long: Testin (423 aa).

Disordered regions lie at residues 1 to 21 (MSAT…ACAS) and 138 to 169 (EKQP…PSKC). The PET domain occupies 97–204 (MILTNPVAAK…GDVKFPSEMN (108 aa)). A compositionally biased stretch (basic and acidic residues) spans 160–169 (PAHDQDPSKC). LIM zinc-binding domains follow at residues 236-299 (YSCY…CDSE), 301-361 (PRCA…NHAV), and 364-423 (QGCH…RMMS).

The protein belongs to the prickle / espinas / testin family. As to quaternary structure, interacts via LIM domain 1 with ZYX. Interacts (via LIM domain 3) with ENAH and VASP. Interacts with ALKBH4, talin, actin, alpha-actinin, GRIP1 and PXN. Interacts (via LIM domain 2) with ACTL7A (via N-terminus). Heterodimer with ACTL7A; the heterodimer interacts with ENAH to form a heterotrimer. As to expression, detected at the acrosome of round spermatids (at protein level). Isoform TES1 transcript is highly expressed in adult testis and detected at low levels in other tissues. Isoform TES2 transcript is highly expressed in testis, kidney and spleen; intermediate in thymus, submaxillary gland and lung; detected at low levels in other tissues.

The protein localises to the cytoplasm. Its subcellular location is the cell junction. It is found in the focal adhesion. Scaffold protein that may play a role in cell adhesion, cell spreading and in the reorganization of the actin cytoskeleton. Plays a role in the regulation of cell proliferation. May act as a tumor suppressor. In Mus musculus (Mouse), this protein is Testin (Tes).